Reading from the N-terminus, the 723-residue chain is Peroxisomal bifunctional enzyme (723 aa).

The enoyl-CoA hydratase / isomerase stretch occupies residues 1–282 (MAEYTRLHNA…FAERKANKWS (282 aa)). Lys-38 bears the N6-succinyllysine mark. Residue Gly-101 coordinates substrate. At Lys-165 the chain carries N6-acetyllysine; alternate. Lys-165 is subject to N6-succinyllysine; alternate. At Lys-171 the chain carries N6-acetyllysine. Lys-219 bears the N6-acetyllysine; alternate mark. Lys-219 bears the N6-succinyllysine; alternate mark. At Lys-250 the chain carries N6-acetyllysine. N6-succinyllysine occurs at positions 280 and 290. Positions 283 to 572 (TPSGASWKTA…DVLCELGRFG (290 aa)) are 3-hydroxyacyl-CoA dehydrogenase. 3 positions are modified to N6-acetyllysine: Lys-346, Lys-350, and Lys-464. Lys-532 bears the N6-succinyllysine mark. Phosphothreonine is present on Thr-548. Lys-577 bears the N6-succinyllysine mark. Lys-584, Lys-591, and Lys-710 each carry N6-acetyllysine; alternate. Lys-584, Lys-591, and Lys-710 each carry N6-succinyllysine; alternate. A Phosphoserine modification is found at Ser-718. The Microbody targeting signal signature appears at 721–723 (SKL). N6-succinyllysine is present on Lys-722.

The protein in the N-terminal section; belongs to the enoyl-CoA hydratase/isomerase family. It in the C-terminal section; belongs to the 3-hydroxyacyl-CoA dehydrogenase family. Monomer. Post-translationally, acetylated, leading to enhanced enzyme activity. Acetylation is enhanced by up to 80% after treatment either with trichostin A (TSA) or with nicotinamide (NAM) with highest increase on Lys-346. Acetylation and enzyme activity increased by about 1.5% on addition of fatty acids. As to expression, liver and kidney. Strongly expressed in the terminal segments of the proximal tubule. Lower amounts seen in the brain.

The protein localises to the peroxisome. It carries out the reaction a (3S)-3-hydroxyacyl-CoA = a (2E)-enoyl-CoA + H2O. The enzyme catalyses a 4-saturated-(3S)-3-hydroxyacyl-CoA = a (3E)-enoyl-CoA + H2O. The catalysed reaction is a (3Z)-enoyl-CoA = a 4-saturated (2E)-enoyl-CoA. It catalyses the reaction a (3E)-enoyl-CoA = a 4-saturated (2E)-enoyl-CoA. It carries out the reaction a (3S)-3-hydroxyacyl-CoA + NAD(+) = a 3-oxoacyl-CoA + NADH + H(+). The enzyme catalyses (2S,3S)-3-hydroxy-2-methylbutanoyl-CoA = (2E)-2-methylbut-2-enoyl-CoA + H2O. The catalysed reaction is (3S)-hydroxyhexadecanoyl-CoA + NAD(+) = 3-oxohexadecanoyl-CoA + NADH + H(+). It catalyses the reaction (3S)-hydroxyhexadecanoyl-CoA = (2E)-hexadecenoyl-CoA + H2O. It carries out the reaction (2E)-hexadecenedioyl-CoA + H2O = (3S)-hydroxyhexadecanedioyl-CoA. The enzyme catalyses (3S)-hydroxyhexadecanedioyl-CoA + NAD(+) = 3-oxohexadecanedioyl-CoA + NADH + H(+). The catalysed reaction is (3E,5Z)-tetradecadienoyl-CoA = (2E,5Z)-tetradecadienoyl-CoA. It catalyses the reaction (3E,5Z)-octadienoyl-CoA = (2E,5Z)-octadienoyl-CoA. It carries out the reaction (3S)-hydroxydecanoyl-CoA + NAD(+) = 3-oxodecanoyl-CoA + NADH + H(+). The enzyme catalyses (3E)-decenoyl-CoA = (2E)-decenoyl-CoA. The catalysed reaction is (3Z)-hexenoyl-CoA = (2E)-hexenoyl-CoA. It catalyses the reaction (3E)-hexenoyl-CoA = (2E)-hexenoyl-CoA. It carries out the reaction (3S)-hydroxydecanoyl-CoA = (2E)-decenoyl-CoA + H2O. The enzyme catalyses (3S)-hydroxyhexanoyl-CoA = (2E)-hexenoyl-CoA + H2O. It functions in the pathway lipid metabolism; fatty acid beta-oxidation. Its activity is regulated as follows. Enzyme activity enhanced by acetylation. Its function is as follows. Peroxisomal trifunctional enzyme possessing 2-enoyl-CoA hydratase, 3-hydroxyacyl-CoA dehydrogenase, and delta 3, delta 2-enoyl-CoA isomerase activities. Catalyzes two of the four reactions of the long chain fatty acids peroxisomal beta-oxidation pathway. Can also use branched-chain fatty acids such as 2-methyl-2E-butenoyl-CoA as a substrate, which is hydrated into (2S,3S)-3-hydroxy-2-methylbutanoyl-CoA. Optimal isomerase for 2,5 double bonds into 3,5 form isomerization in a range of enoyl-CoA species. Also able to isomerize both 3-cis and 3-trans double bonds into the 2-trans form in a range of enoyl-CoA species. With HSD17B4, catalyzes the hydration of trans-2-enoyl-CoA and the dehydrogenation of 3-hydroxyacyl-CoA, but with opposite chiral specificity. Regulates the amount of medium-chain dicarboxylic fatty acids which are essential regulators of all fatty acid oxidation pathways. Also involved in the degradation of long-chain dicarboxylic acids through peroxisomal beta-oxidation. The protein is Peroxisomal bifunctional enzyme of Homo sapiens (Human).